Here is a 342-residue protein sequence, read N- to C-terminus: Methyltransferase ungE' (342 aa).

This sequence belongs to the methyltransferase superfamily.

It participates in secondary metabolite biosynthesis. Methyltransferase; part of the gene cluster that mediates the biosynthesis of the unguisins, gamma-aminobutyric acid (GABA)-containing fungal cyclic heptapeptides with the amino acid sequence cyclo-(D-Ala1-D-Val2-L-Leu3-beta-MePhe4-D-Ala5-D-Trp6-GABA7) for unguisin H and cyclo-(D-Ala1-D-Ala2-L-Leu3-beta-MePhe4-D-Ala5-D-Trp6-GABA7) for unguisin I. Within the pathway, the methyltransferase ungE' is probably involved in the synthesis of the (2R,3R)-beta-methylphenylalanine residue incorporated by the module 4 of the nonribosomal peptide synthetase (NRPS) ungA'. The alanine racemase ungC' catalyzes the interconversion of L-alanine and D-alanine, providing the D-alanine which is accepted by the first adenylation domain of ungA'. UngA' is the main enzyme within the cluster which condenses the 7 residues using its respective 7 modules. The terminal condensation domain (Ct) is involved in cyclization with D-alanine and thereby releasing of unguisins H and I. Finally, the hydrolase ungD' catalyzes the hydrolysis between the D-tryptophan and GABA residues of unguisins H and I to produce the corresponding linear peptides. The protein is Methyltransferase ungE' of Aspergillus campestris (strain IBT 28561).